Consider the following 225-residue polypeptide: Transmembrane protein C16orf54 homolog (225 aa).

Residues 32–52 (PCIPIMLGLASLTAFFIITTA) form a helical membrane-spanning segment. Disordered stretches follow at residues 106 to 163 (DRAP…ERPH) and 178 to 200 (EAGLQVGSPRPWRPRQGSLEPDW). A phosphothreonine mark is found at T113 and T117. The segment covering 122–140 (ATAPPATSAPYSSLSSLVP) has biased composition (low complexity). Residue S195 is modified to Phosphoserine.

The protein resides in the membrane. The protein is Transmembrane protein C16orf54 homolog of Mus musculus (Mouse).